A 149-amino-acid polypeptide reads, in one-letter code: Arginine repressor (149 aa).

This sequence belongs to the ArgR family.

The protein localises to the cytoplasm. Its pathway is amino-acid biosynthesis; L-arginine biosynthesis [regulation]. Functionally, regulates arginine biosynthesis genes. The protein is Arginine repressor of Bacillus mycoides (strain KBAB4) (Bacillus weihenstephanensis).